We begin with the raw amino-acid sequence, 115 residues long: Probable non-functional immunoglobulin heavy variable 8-51-1 (115 aa).

The first 17 residues, 1-17, serve as a signal peptide directing secretion; it reads MLVCVLLYSFRLFGIQG. Positions 18 to 42 are framework-1; that stretch reads EAQLTESGGDLVHLEGPLRLSCAAS. Positions 19 to 115 constitute an Ig-like domain; the sequence is AQLTESGGDL…QNMAAFNCAG (97 aa). Positions 43 to 50 are complementarity-determining-1; it reads WFTFSIYE. Positions 51–67 are framework-2; the sequence is IHWVCQASGKGLEWVAV. A disulfide bond links Cys55 and Cys113. Residues 68–75 form a complementarity-determining-2 region; that stretch reads IWRGESHQ. Positions 76–113 are framework-3; it reads YNADYVRGRLTTSRDNTKYMLYMQMISLRTQNMAAFNC. Residues 114–115 are complementarity-determining-3; sequence AG.

As to quaternary structure, immunoglobulins are composed of two identical heavy chains and two identical light chains; disulfide-linked.

It is found in the secreted. The protein resides in the cell membrane. Functionally, probable non-functional open reading frame (ORF) of V region of the variable domain of immunoglobulin heavy chains. Non-functional ORF generally cannot participate in the synthesis of a productive immunoglobulin chain due to altered V-(D)-J or switch recombination and/or splicing site (at mRNA level) and/or conserved amino acid change (protein level). Immunoglobulins, also known as antibodies, are membrane-bound or secreted glycoproteins produced by B lymphocytes. In the recognition phase of humoral immunity, the membrane-bound immunoglobulins serve as receptors which, upon binding of a specific antigen, trigger the clonal expansion and differentiation of B lymphocytes into immunoglobulins-secreting plasma cells. Secreted immunoglobulins mediate the effector phase of humoral immunity, which results in the elimination of bound antigens. The antigen binding site is formed by the variable domain of one heavy chain, together with that of its associated light chain. Thus, each immunoglobulin has two antigen binding sites with remarkable affinity for a particular antigen. The variable domains are assembled by a process called V-(D)-J rearrangement and can then be subjected to somatic hypermutations which, after exposure to antigen and selection, allow affinity maturation for a particular antigen. The protein is Probable non-functional immunoglobulin heavy variable 8-51-1 of Homo sapiens (Human).